The chain runs to 290 residues: Chitinase 10 (290 aa).

An N-terminal signal peptide occupies residues 1–28; the sequence is MAKPTPAPRATPFLLAAVLSIVVVAASG. Cystine bridges form between C70–C132 and C144–C153. E114 serves as the catalytic Proton donor. 2 N-linked (GlcNAc...) asparagine glycosylation sites follow: N193 and N234. A disulfide bridge connects residues C252 and C284.

This sequence belongs to the glycosyl hydrolase 19 family. Chitinase class I subfamily. Expressed at low levels in roots, leaves and meristems.

It carries out the reaction Random endo-hydrolysis of N-acetyl-beta-D-glucosaminide (1-&gt;4)-beta-linkages in chitin and chitodextrins.. In Oryza sativa subsp. japonica (Rice), this protein is Chitinase 10 (Cht10).